The chain runs to 83 residues: Small integral membrane protein 10 (83 aa).

Residues 64–82 (FFYFYILASVILNVHLQVY) traverse the membrane as a helical segment.

It is found in the membrane. This Homo sapiens (Human) protein is Small integral membrane protein 10 (SMIM10).